Here is a 285-residue protein sequence, read N- to C-terminus: Bifunctional protein FolD (285 aa).

NADP(+) is bound by residues 166–168 (GAS) and Ile-232.

It belongs to the tetrahydrofolate dehydrogenase/cyclohydrolase family. Homodimer.

It catalyses the reaction (6R)-5,10-methylene-5,6,7,8-tetrahydrofolate + NADP(+) = (6R)-5,10-methenyltetrahydrofolate + NADPH. The catalysed reaction is (6R)-5,10-methenyltetrahydrofolate + H2O = (6R)-10-formyltetrahydrofolate + H(+). It participates in one-carbon metabolism; tetrahydrofolate interconversion. Its function is as follows. Catalyzes the oxidation of 5,10-methylenetetrahydrofolate to 5,10-methenyltetrahydrofolate and then the hydrolysis of 5,10-methenyltetrahydrofolate to 10-formyltetrahydrofolate. The polypeptide is Bifunctional protein FolD (Buchnera aphidicola subsp. Schizaphis graminum (strain Sg)).